Consider the following 931-residue polypeptide: Protein translocase subunit SecA (931 aa).

Residues glutamine 87, 105–109 (GEGKT), and aspartate 523 contribute to the ATP site. Residues cysteine 915, cysteine 917, cysteine 926, and histidine 927 each contribute to the Zn(2+) site.

Belongs to the SecA family. In terms of assembly, monomer and homodimer. Part of the essential Sec protein translocation apparatus which comprises SecA, SecYEG and auxiliary proteins SecDF-YajC and YidC. It depends on Zn(2+) as a cofactor.

The protein localises to the cell inner membrane. Its subcellular location is the cytoplasm. The enzyme catalyses ATP + H2O + cellular proteinSide 1 = ADP + phosphate + cellular proteinSide 2.. In terms of biological role, part of the Sec protein translocase complex. Interacts with the SecYEG preprotein conducting channel. Has a central role in coupling the hydrolysis of ATP to the transfer of proteins into and across the cell membrane, serving both as a receptor for the preprotein-SecB complex and as an ATP-driven molecular motor driving the stepwise translocation of polypeptide chains across the membrane. The sequence is that of Protein translocase subunit SecA from Xanthobacter autotrophicus (strain ATCC BAA-1158 / Py2).